Here is a 290-residue protein sequence, read N- to C-terminus: Energy-coupling factor transporter ATP-binding protein EcfA2 (290 aa).

The region spanning 6–246 (EKVEHVYNAR…ADKLAAIGLS (241 aa)) is the ABC transporter domain. 40–47 (GHTGSGKS) contacts ATP.

It belongs to the ABC transporter superfamily. Energy-coupling factor EcfA family. Forms a stable energy-coupling factor (ECF) transporter complex composed of 2 membrane-embedded substrate-binding proteins (S component), 2 ATP-binding proteins (A component) and 2 transmembrane proteins (T component).

It is found in the cell membrane. In terms of biological role, ATP-binding (A) component of a common energy-coupling factor (ECF) ABC-transporter complex. Unlike classic ABC transporters this ECF transporter provides the energy necessary to transport a number of different substrates. This Geobacillus kaustophilus (strain HTA426) protein is Energy-coupling factor transporter ATP-binding protein EcfA2.